Consider the following 58-residue polypeptide: UPF0391 membrane protein ABO_0024 (58 aa).

2 helical membrane passes run 4 to 24 (WALTFLVVAIIAGVLGFGGIA) and 28 to 48 (ASIAKIIFFIFLALLVISLVV).

It belongs to the UPF0391 family.

The protein resides in the cell membrane. This chain is UPF0391 membrane protein ABO_0024, found in Alcanivorax borkumensis (strain ATCC 700651 / DSM 11573 / NCIMB 13689 / SK2).